Reading from the N-terminus, the 306-residue chain is tRNA dimethylallyltransferase (306 aa).

11–18 (GPTAVGKS) lines the ATP pocket. Substrate is bound at residue 13–18 (TAVGKS). The segment at 35–38 (DSIQ) is interaction with substrate tRNA.

This sequence belongs to the IPP transferase family. As to quaternary structure, monomer. Mg(2+) serves as cofactor.

It catalyses the reaction adenosine(37) in tRNA + dimethylallyl diphosphate = N(6)-dimethylallyladenosine(37) in tRNA + diphosphate. Catalyzes the transfer of a dimethylallyl group onto the adenine at position 37 in tRNAs that read codons beginning with uridine, leading to the formation of N6-(dimethylallyl)adenosine (i(6)A). In Borreliella burgdorferi (strain ZS7) (Borrelia burgdorferi), this protein is tRNA dimethylallyltransferase.